A 159-amino-acid chain; its full sequence is Transmembrane protein 42 (159 aa).

The next 4 membrane-spanning stretches (helical) occupy residues Phe37 to Ala57, Leu59 to Ser79, Ile100 to Leu120, and Cys124 to His144.

It localises to the membrane. The sequence is that of Transmembrane protein 42 (TMEM42) from Homo sapiens (Human).